The sequence spans 393 residues: Methylthioribose-1-phosphate isomerase (393 aa).

D265 (proton donor) is an active-site residue.

It belongs to the eIF-2B alpha/beta/delta subunits family. MtnA subfamily.

The protein resides in the cytoplasm. It localises to the nucleus. It catalyses the reaction 5-(methylsulfanyl)-alpha-D-ribose 1-phosphate = 5-(methylsulfanyl)-D-ribulose 1-phosphate. It functions in the pathway amino-acid biosynthesis; L-methionine biosynthesis via salvage pathway; L-methionine from S-methyl-5-thio-alpha-D-ribose 1-phosphate: step 1/6. Functionally, catalyzes the interconversion of methylthioribose-1-phosphate (MTR-1-P) into methylthioribulose-1-phosphate (MTRu-1-P). The polypeptide is Methylthioribose-1-phosphate isomerase (Cryptococcus neoformans var. neoformans serotype D (strain B-3501A) (Filobasidiella neoformans)).